The chain runs to 101 residues: NADH-quinone oxidoreductase subunit K (101 aa).

A run of 3 helical transmembrane segments spans residues 4–24 (LSHYLTVAAILFTLGVLGIFI), 30–50 (IVILMCVELILLAVNINLVAF), and 65–85 (FVLTVAAAEAAIGLAILVVFF).

The protein belongs to the complex I subunit 4L family. As to quaternary structure, NDH-1 is composed of 14 different subunits. Subunits NuoA, H, J, K, L, M, N constitute the membrane sector of the complex.

The protein localises to the cell inner membrane. It carries out the reaction a quinone + NADH + 5 H(+)(in) = a quinol + NAD(+) + 4 H(+)(out). Its function is as follows. NDH-1 shuttles electrons from NADH, via FMN and iron-sulfur (Fe-S) centers, to quinones in the respiratory chain. The immediate electron acceptor for the enzyme in this species is believed to be ubiquinone. Couples the redox reaction to proton translocation (for every two electrons transferred, four hydrogen ions are translocated across the cytoplasmic membrane), and thus conserves the redox energy in a proton gradient. This is NADH-quinone oxidoreductase subunit K from Methylobacterium sp. (strain 4-46).